The primary structure comprises 375 residues: Alcohol dehydrogenase 1 (375 aa).

Serine 2 is subject to N-acetylserine. Residues cysteine 47, histidine 68, cysteine 98, cysteine 101, cysteine 104, cysteine 112, and cysteine 175 each coordinate Zn(2+). Residues 200 to 205, aspartate 224, and lysine 229 each bind NAD(+); that span reads GLGGVG. At lysine 234 the chain carries N6-succinyllysine. Residue 293 to 295 participates in NAD(+) binding; sequence VGV. Lysine 340 is modified (N6-succinyllysine). Arginine 370 is a binding site for NAD(+).

This sequence belongs to the zinc-containing alcohol dehydrogenase family. Class-I subfamily. As to quaternary structure, dimer of identical or non-identical chains of three types (A, B, C), which are coded by 3 separate genes at different loci. Requires Zn(2+) as cofactor. As to expression, expressed at high levels in the liver, small intestine and eye, at moderate levels in kidney, ovary and uterus, and at low levels in the spinal cord, thymus, heart, stomach mucosa, skin and testis.

The protein localises to the cytoplasm. The catalysed reaction is a primary alcohol + NAD(+) = an aldehyde + NADH + H(+). The enzyme catalyses a secondary alcohol + NAD(+) = a ketone + NADH + H(+). The protein is Alcohol dehydrogenase 1 (Adh1) of Mus musculus (Mouse).